A 275-amino-acid chain; its full sequence is Penicillin-insensitive murein endopeptidase (275 aa).

The signal sequence occupies residues Met-1–Ala-19. 3 cysteine pairs are disulfide-bonded: Cys-44-Cys-264, Cys-187-Cys-235, and Cys-216-Cys-223. Positions 110, 113, 120, 147, and 211 each coordinate Zn(2+). Positions Asp-227–Pro-262 are disordered. Positions Gln-244–Pro-262 are enriched in pro residues.

Belongs to the peptidase M74 family. As to quaternary structure, dimer. The cofactor is Zn(2+).

The protein resides in the periplasm. Murein endopeptidase that cleaves the D-alanyl-meso-2,6-diamino-pimelyl amide bond that connects peptidoglycan strands. Likely plays a role in the removal of murein from the sacculus. In Yersinia pestis, this protein is Penicillin-insensitive murein endopeptidase.